The following is a 491-amino-acid chain: Serine hydroxymethyltransferase (491 aa).

Residues leucine 173 and 177–179 each bind (6S)-5,6,7,8-tetrahydrofolate; that span reads GHL. An N6-(pyridoxal phosphate)lysine modification is found at lysine 285.

It belongs to the SHMT family. As to quaternary structure, homodimer. The cofactor is pyridoxal 5'-phosphate.

Its subcellular location is the cytoplasm. The enzyme catalyses (6R)-5,10-methylene-5,6,7,8-tetrahydrofolate + glycine + H2O = (6S)-5,6,7,8-tetrahydrofolate + L-serine. It functions in the pathway one-carbon metabolism; tetrahydrofolate interconversion. Its pathway is amino-acid biosynthesis; glycine biosynthesis; glycine from L-serine: step 1/1. In terms of biological role, catalyzes the reversible interconversion of serine and glycine with tetrahydrofolate (THF) serving as the one-carbon carrier. This reaction serves as the major source of one-carbon groups required for the biosynthesis of purines, thymidylate, methionine, and other important biomolecules. Also exhibits THF-independent aldolase activity toward beta-hydroxyamino acids, producing glycine and aldehydes, via a retro-aldol mechanism. In Cutibacterium acnes (strain DSM 16379 / KPA171202) (Propionibacterium acnes), this protein is Serine hydroxymethyltransferase.